Reading from the N-terminus, the 185-residue chain is MINDVLKEAEDRMVKAVEALKREYATIRAGRANPNMLDKITVEYYGTQTPVNQLANISVPEPRMLTIQPWDKSSLPMIEKAILKSDLGLNPSSDGTVIRLLIPQLTAERRTEIVKTVKKKAEDSRVAVRNIRRDSNDELKKLEKDHTASEDEVKRAQDDVQKMTDKFVKEIDRIMGTKEKEIMEV.

Residues Glu138–Gln157 are disordered.

Belongs to the RRF family.

The protein localises to the cytoplasm. Its function is as follows. Responsible for the release of ribosomes from messenger RNA at the termination of protein biosynthesis. May increase the efficiency of translation by recycling ribosomes from one round of translation to another. The sequence is that of Ribosome-recycling factor from Desulfitobacterium hafniense (strain DSM 10664 / DCB-2).